Reading from the N-terminus, the 187-residue chain is Threonylcarbamoyl-AMP synthase (187 aa).

Positions 3 to 187 (EVLPADVAEL…AKSGQVIRKG (185 aa)) constitute a YrdC-like domain.

Belongs to the SUA5 family. TsaC subfamily.

It localises to the cytoplasm. The catalysed reaction is L-threonine + hydrogencarbonate + ATP = L-threonylcarbamoyladenylate + diphosphate + H2O. Its function is as follows. Required for the formation of a threonylcarbamoyl group on adenosine at position 37 (t(6)A37) in tRNAs that read codons beginning with adenine. Catalyzes the conversion of L-threonine, HCO(3)(-)/CO(2) and ATP to give threonylcarbamoyl-AMP (TC-AMP) as the acyladenylate intermediate, with the release of diphosphate. This is Threonylcarbamoyl-AMP synthase from Shewanella halifaxensis (strain HAW-EB4).